A 732-amino-acid polypeptide reads, in one-letter code: Wall-associated receptor kinase 2 (732 aa).

Positions 1–23 (MKVQEGLFVVAVFYLAYTQLVKG) are cleaved as a signal peptide. The Extracellular segment spans residues 24–329 (QPRKECQTRC…RKVRPEYFRW (306 aa)). N-linked (GlcNAc...) asparagine glycans are attached at residues Asn57, Asn75, Asn111, Asn154, Asn217, and Asn246. The 48-residue stretch at 230 to 277 (GDKTCKQVEYRGVCGGNSTCFDSTGGTGYNCKCLEGFEGNPYLPNGCQ) folds into the EGF-like 1 domain. Disulfide bonds link Cys234-Cys249, Cys243-Cys260, Cys262-Cys276, Cys282-Cys295, Cys289-Cys304, and Cys306-Cys318. The 42-residue stretch at 278 to 319 (DINECISSRHNCSEHSTCENTKGSFNCNCPSGYRKDSLNSCT) folds into the EGF-like 2; calcium-binding domain. A glycan (N-linked (GlcNAc...) asparagine) is linked at Asn288. The helical transmembrane segment at 330 to 350 (TQIFLGTTIGFSVIMLGISCL) threads the bilayer. The Cytoplasmic portion of the chain corresponds to 351-732 (QQKIKHRKNT…VTTLDIEAGR (382 aa)). Thr393 carries the post-translational modification Phosphothreonine. The region spanning 404 to 677 (YHESRILGQG…KEVAAELEAL (274 aa)) is the Protein kinase domain. ATP is bound by residues 410-418 (LGQGGQGTV) and Lys432. Position 477 is a phosphotyrosine (Tyr477). Asp529 (proton acceptor) is an active-site residue. Thr563 and Thr568 each carry phosphothreonine. Residue Tyr576 is modified to Phosphotyrosine.

This sequence belongs to the protein kinase superfamily. Ser/Thr protein kinase family. As to expression, predominantly expressed in green tissues such as stems and leaves. Detected at organ junctions.

It is found in the membrane. It carries out the reaction L-seryl-[protein] + ATP = O-phospho-L-seryl-[protein] + ADP + H(+). The catalysed reaction is L-threonyl-[protein] + ATP = O-phospho-L-threonyl-[protein] + ADP + H(+). Functionally, serine/threonine-protein kinase that may function as a signaling receptor of extracellular matrix component. Binding to pectin may have significance in the control of cell expansion, morphogenesis and development. The protein is Wall-associated receptor kinase 2 (WAK2) of Arabidopsis thaliana (Mouse-ear cress).